The chain runs to 316 residues: LIM/homeobox protein lim-6 (316 aa).

2 consecutive LIM zinc-binding domains span residues 40-101 (KLCS…LYGK) and 102-163 (RCRR…ICNF). Residues 186-245 (PKRPRTILNAQQRRQFKTAFERSSKPSRKVREQLANETGLSVRVVQVWFQNQRAKIKKLN) constitute a DNA-binding region (homeobox). The interval 244 to 297 (LNKKDSDSGDTFKHGPGSEGRSTEDIRSSDDEEESVINLDADEVETSETSSYTD) is disordered. The span at 246–256 (KKDSDSGDTFK) shows a compositional bias: basic and acidic residues. Over residues 273-289 (DDEEESVINLDADEVET) the composition is skewed to acidic residues.

It is found in the nucleus. Its function is as follows. Transcription factor. Required for the terminal differentiation of sensory- and motor-neurons, especially GABAergic neurons, and for morphological aspects of uterine development. Plays a role in the cell-type-specific regulation of glutamic acid decarboxylase unc-25. Involved in promoting sleep-like behavioral quiescence, acting by modulating expression of transcription factor aptf-1 in the single sleep-active ring interneuron RIS. Plays a role in regulation of RIS differentiation. Required for the functional asymmetry of the ASER and ASEL chemosensory neuron pair, conferring the ability to discriminate sodium from chloride, perhaps by modulating expression of receptor-type guanylate cyclases, such as gcy-5. Involved in regulating postembryonic axon maintenance in the ventral nerve cord, acting in concert with LIM homeobox protein ceh-14, via modulation of expression of immunoglobulin domain zig genes in the interneuron PVT. May play a role in the functions of the excretory gland cell. This is LIM/homeobox protein lim-6 from Caenorhabditis elegans.